The sequence spans 1007 residues: MASTAPNEQFPSCVRCKEFITTGHAYELGCDRWHTHCFACYKCEKPLSCESDFLVLGTGALICFDCSDSCKNCGKKIDDLAIILSSSNEAYCSDCFKCCKCGENIADLRYAKTKRGLFCLSCHEKLLAKRKYYEEKKRRLKKNLPSLPTPVIDNGHTDEVSASAVLPEKTFSRPASLVNEIPSGSEPSKDIETNSSDIVPHFITGYNDSDDNSGSSKFGSNVSIDVIGPEENSTEHVNDDVKEEAEAPSANMSLNVATDPTLSCKEPPSHSRNLLNKTPLRNSSGQYLAKSPSSYRQGIIVNDSLEESDQIDPPNNSSRNASELLTSVLHSPVSVNMKNPKGSNTDIFNTGEISQMDPSLSRKVLNNIVEETNALQRPVVEVVKEDRSVPDLAGVQQEQAEKYSYSNNSGKGRKISRSLSRRSKDLMINLKSRATGKQDSNVKLSPASKVTSRRSQDLMRDNDSHTGLDTPNSNSTSLDILVNNQKSLNYKRFTDNGTLRVTSGKETALEEQKNHSFKSPSPIDHLLQSPATPSNVSMYRTPPLDSSLTFDRRNGSSYSNQNYSIPSWQKTPKTQLENSDNFEEQKETLYENSESRNDPSLDKEIVTAEHYLKQLKINLKELESQREELMKEITEMKSMKEALRRHIESYNSEKNKLYLDSNELSNNPPMINEISLGESPPVKHVATASSVARSSVKPKFWKFFSSAKPQTEQSIQGVSTNNTNSIVKSAPVLLSAPSSGSNSGRLEISPPVLQNPNEFSDVRLVPIENDANMGQSKDGEEYLDGSNLYGSSLVARCNYENNEIPMILSVCIDFIESDEENMRSEGIYRKSGSQLVIEEIEKQFSAWKVQQNTETPNILTEQDLNVVTGVLKRYLRKLPNPIFTFQIYEPLMRLVKSKKMMENLPFVGGKLSLEAKNSDTYMSSKSALKNILEDLPREHYRVLRVLSEHIEKVTRYSHWNRMTLYNLALVFAPGLIRDFSGEKDIIDMKERNYIVAFIFGNYKDILT.

LIM zinc-binding domains follow at residues 13–66 (CVRC…CFDC) and 70–122 (CKNC…CLSC). Disordered stretches follow at residues 203-293 (ITGY…KSPS), 401-478 (EKYS…STSL), and 505-600 (KETA…NDPS). The segment covering 212 to 221 (NSGSSKFGSN) has biased composition (low complexity). 2 stretches are compositionally biased toward polar residues: residues 250–261 (ANMSLNVATDPT) and 270–293 (HSRN…KSPS). Thr-278 carries the phosphothreonine modification. At Ser-291 the chain carries Phosphoserine. Residues 411–421 (KGRKISRSLSR) show a composition bias toward basic residues. Basic and acidic residues predominate over residues 454 to 466 (RSQDLMRDNDSHT). Composition is skewed to polar residues over residues 467-478 (GLDTPNSNSTSL) and 529-579 (SPAT…LENS). Position 532 is a phosphothreonine (Thr-532). A compositionally biased stretch (basic and acidic residues) spans 583–600 (EEQKETLYENSESRNDPS). In terms of domain architecture, Rho-GAP spans 791–1006 (SSLVARCNYE…FIFGNYKDIL (216 aa)).

GTPase-activating protein (GAP) for CDC42 and/or RHO1. Negative regulator of the pheromone-response pathway through the STE20 protein kinase; acts at a step between the G-protein and the MAP kinase module. Dominant suppressor of bud emergence defect caused by deletion of IPL2/BEM2. Involved in the control of polarized cell growth and proper bud site selection. This Saccharomyces cerevisiae (strain ATCC 204508 / S288c) (Baker's yeast) protein is Rho-type GTPase-activating protein 1 (RGA1).